Reading from the N-terminus, the 434-residue chain is MTILVIGINHKTASVAIREKVAFSAEKRVEALAQIQQQALAESAVILSTCNRTEVYFHHKAIPPQEAESWTARCMQWFAEIHQLSLDALAGCLYSQQNQQAVLHLMRVACGLDSLVLGEPQILGQVKDAYQLSKMYYQGQNQPLSSEFSRLFQKTFSVAKRVRTETNIGGNAVSVAYGACSLARQIFDSLKTLNVLLVGAGETIELTCRHLLRHGVQRIMIANRTFERAQHLVTKLDGAENVQVLALTQLQEGLNQADIVISSTGSPTILITQDMVKIAQKARCDLPMLLVDIAVPRDIEESVGELDSIYHYTVDDLQTIIQRNLVEREKASAQAWVIIQQECADFFEWLKVHQFSNLIRSYRENAEDIRQILLEKALLALRQGEDSEAVLQALSYKLTNKLLHSPTQVMNAMVKTGNSTGLALFSSTLKSDVE.

Substrate-binding positions include 49 to 52 (TCNR), Ser-114, 119 to 121 (EPQ), and Gln-125. The active-site Nucleophile is the Cys-50. Residue 199 to 204 (GAGETI) coordinates NADP(+).

The protein belongs to the glutamyl-tRNA reductase family. In terms of assembly, homodimer.

It catalyses the reaction (S)-4-amino-5-oxopentanoate + tRNA(Glu) + NADP(+) = L-glutamyl-tRNA(Glu) + NADPH + H(+). Its pathway is porphyrin-containing compound metabolism; protoporphyrin-IX biosynthesis; 5-aminolevulinate from L-glutamyl-tRNA(Glu): step 1/2. Its function is as follows. Catalyzes the NADPH-dependent reduction of glutamyl-tRNA(Glu) to glutamate 1-semialdehyde (GSA). This Pasteurella multocida (strain Pm70) protein is Glutamyl-tRNA reductase.